A 412-amino-acid chain; its full sequence is Tyrosine--tRNA ligase (412 aa).

An L-tyrosine-binding site is contributed by tyrosine 31. The 'HIGH' region signature appears at 36–45 (PTAPSLHIGH). Positions 162 and 166 each coordinate L-tyrosine. The 'KMSKS' region signature appears at 222–226 (KIGKT). Lysine 225 is a binding site for ATP. The 67-residue stretch at 345–411 (KRWLDIVVEL…GKRKKQVIDL (67 aa)) folds into the S4 RNA-binding domain.

This sequence belongs to the class-I aminoacyl-tRNA synthetase family. TyrS type 1 subfamily. As to quaternary structure, homodimer.

The protein resides in the cytoplasm. The enzyme catalyses tRNA(Tyr) + L-tyrosine + ATP = L-tyrosyl-tRNA(Tyr) + AMP + diphosphate + H(+). In terms of biological role, catalyzes the attachment of tyrosine to tRNA(Tyr) in a two-step reaction: tyrosine is first activated by ATP to form Tyr-AMP and then transferred to the acceptor end of tRNA(Tyr). In Chlamydia trachomatis serovar A (strain ATCC VR-571B / DSM 19440 / HAR-13), this protein is Tyrosine--tRNA ligase.